The chain runs to 189 residues: Large ribosomal subunit protein eL20 (189 aa).

This sequence belongs to the eukaryotic ribosomal protein eL20 family.

The protein resides in the cytoplasm. This is Large ribosomal subunit protein eL20 (RPL18A) from Tetrahymena thermophila.